The chain runs to 415 residues: Serine hydroxymethyltransferase (415 aa).

Over residues 1 to 10 (MERSHIRDVD) the composition is skewed to basic and acidic residues. Positions 1-21 (MERSHIRDVDPDAADALSSER) are disordered. Residues Leu-119 and 123–125 (GHL) each bind (6S)-5,6,7,8-tetrahydrofolate. Position 228 is an N6-(pyridoxal phosphate)lysine (Lys-228). 353-355 (SAF) is a binding site for (6S)-5,6,7,8-tetrahydrofolate.

This sequence belongs to the SHMT family. In terms of assembly, homodimer. It depends on pyridoxal 5'-phosphate as a cofactor.

It is found in the cytoplasm. It catalyses the reaction (6R)-5,10-methylene-5,6,7,8-tetrahydrofolate + glycine + H2O = (6S)-5,6,7,8-tetrahydrofolate + L-serine. It participates in one-carbon metabolism; tetrahydrofolate interconversion. It functions in the pathway amino-acid biosynthesis; glycine biosynthesis; glycine from L-serine: step 1/1. In terms of biological role, catalyzes the reversible interconversion of serine and glycine with tetrahydrofolate (THF) serving as the one-carbon carrier. Also exhibits THF-independent aldolase activity toward beta-hydroxyamino acids, producing glycine and aldehydes, via a retro-aldol mechanism. This Haloquadratum walsbyi (strain DSM 16790 / HBSQ001) protein is Serine hydroxymethyltransferase.